The chain runs to 340 residues: MYGLLRNLLFRLPPERAHNVALGSLDVAQKLGILNTFTRQPEPCPVNVMGLEFPNPVGLAAGLDKNADHIDALGALGFGFIEVGTVTPLAQPGNPKPRMFRLPEHQAIINRMGFNNEGLEHLITNVRHRRYRGVLGINVGKNKDTPNEQSEQDYRKGIAAVYPYADYITVNVSSPNTPGLRDLQFGDSLKQLLHAIKEEQAACEQKHGRYVPVAVKIAPDMDEQGIRFVAAALLEAGLDGVIATNTTISREAVKGHVHEQEAGGLSGAPVREASVKVIQGLYAELGDRLPIIGVGGITDGDSAAEKIRAGAKLVQIYTGFIYRGPSLINEAVEAIRKEIS.

FMN is bound by residues 61-65 (AGLDK) and Thr85. Substrate is bound at residue Lys65. Residue 110 to 114 (NRMGF) participates in substrate binding. Positions 138 and 171 each coordinate FMN. A substrate-binding site is contributed by Asn171. The Nucleophile role is filled by Ser174. A substrate-binding site is contributed by Asn176. Residues Lys216 and Thr244 each contribute to the FMN site. 245-246 (NT) is a substrate binding site. Residues Gly267, Gly296, and 317–318 (YT) contribute to the FMN site.

The protein belongs to the dihydroorotate dehydrogenase family. Type 2 subfamily. Monomer. FMN is required as a cofactor.

It localises to the cell membrane. It carries out the reaction (S)-dihydroorotate + a quinone = orotate + a quinol. The protein operates within pyrimidine metabolism; UMP biosynthesis via de novo pathway; orotate from (S)-dihydroorotate (quinone route): step 1/1. Catalyzes the conversion of dihydroorotate to orotate with quinone as electron acceptor. The sequence is that of Dihydroorotate dehydrogenase (quinone) from Marinobacter nauticus (strain ATCC 700491 / DSM 11845 / VT8) (Marinobacter aquaeolei).